Here is a 41-residue protein sequence, read N- to C-terminus: Large ribosomal subunit protein bL36 (41 aa).

This sequence belongs to the bacterial ribosomal protein bL36 family.

This Xylella fastidiosa (strain M23) protein is Large ribosomal subunit protein bL36.